The following is a 112-amino-acid chain: uncharacterized protein (112 aa).

A helical membrane pass occupies residues 62–82 (THSFIFFILFLFIFIFLTFSH).

The protein localises to the membrane. This is an uncharacterized protein from Saccharomyces cerevisiae (strain ATCC 204508 / S288c) (Baker's yeast).